The chain runs to 195 residues: Dephospho-CoA kinase (195 aa).

The DPCK domain occupies 4–195 (IIGLTGGIAS…EQILDALQRL (192 aa)). 12 to 17 (ASGKST) is an ATP binding site.

The protein belongs to the CoaE family.

The protein resides in the cytoplasm. The enzyme catalyses 3'-dephospho-CoA + ATP = ADP + CoA + H(+). It participates in cofactor biosynthesis; coenzyme A biosynthesis; CoA from (R)-pantothenate: step 5/5. Catalyzes the phosphorylation of the 3'-hydroxyl group of dephosphocoenzyme A to form coenzyme A. The polypeptide is Dephospho-CoA kinase (Streptococcus agalactiae serotype III (strain NEM316)).